We begin with the raw amino-acid sequence, 117 residues long: Elafin (117 aa).

The N-terminal stretch at methionine 1 to alanine 22 is a signal peptide. Positions alanine 23–lysine 60 are excised as a propeptide. SVP-1 clotting repeat units follow at residues valine 29–lysine 54 and glycine 55–lysine 72. Residues valine 29 to lysine 72 are 2 X tandem repeats of SVP-1 like motif. In terms of domain architecture, WAP spans valine 69–glutamine 117. Intrachain disulfides connect cysteine 76/cysteine 105, cysteine 83/cysteine 109, cysteine 92/cysteine 104, and cysteine 98/cysteine 113.

It localises to the secreted. In terms of biological role, neutrophil and pancreatic elastase-specific inhibitor of skin. It may prevent elastase-mediated tissue proteolysis. Has been shown to inhibit the alpha-4-beta-2/CHRNA2-CHRNB2 nicotinic acetylcholine receptor and to produce a weak inhibition on Kv11.1/KCNH2/ERG1 and on the transient receptor potential cation channel subfamily V member 1 (TRPV1). This Homo sapiens (Human) protein is Elafin (PI3).